Consider the following 366-residue polypeptide: Ribosomal RNA large subunit methyltransferase M (366 aa).

S-adenosyl-L-methionine is bound by residues S188, 221–224 (CPGG), D240, D260, and D277. K306 (proton acceptor) is an active-site residue.

It belongs to the class I-like SAM-binding methyltransferase superfamily. RNA methyltransferase RlmE family. RlmM subfamily. Monomer.

It localises to the cytoplasm. It catalyses the reaction cytidine(2498) in 23S rRNA + S-adenosyl-L-methionine = 2'-O-methylcytidine(2498) in 23S rRNA + S-adenosyl-L-homocysteine + H(+). Its function is as follows. Catalyzes the 2'-O-methylation at nucleotide C2498 in 23S rRNA. The protein is Ribosomal RNA large subunit methyltransferase M of Shigella boydii serotype 4 (strain Sb227).